We begin with the raw amino-acid sequence, 378 residues long: Phosphoserine aminotransferase (378 aa).

Position 53 (R53) interacts with L-glutamate. Pyridoxal 5'-phosphate is bound by residues W117, T167, D190, and Q213. K214 is subject to N6-(pyridoxal phosphate)lysine. Pyridoxal 5'-phosphate is bound at residue 255–256; it reads NT.

The protein belongs to the class-V pyridoxal-phosphate-dependent aminotransferase family. SerC subfamily. As to quaternary structure, homodimer. Pyridoxal 5'-phosphate serves as cofactor.

Its subcellular location is the cytoplasm. The enzyme catalyses O-phospho-L-serine + 2-oxoglutarate = 3-phosphooxypyruvate + L-glutamate. It catalyses the reaction 4-(phosphooxy)-L-threonine + 2-oxoglutarate = (R)-3-hydroxy-2-oxo-4-phosphooxybutanoate + L-glutamate. The protein operates within amino-acid biosynthesis; L-serine biosynthesis; L-serine from 3-phospho-D-glycerate: step 2/3. It functions in the pathway cofactor biosynthesis; pyridoxine 5'-phosphate biosynthesis; pyridoxine 5'-phosphate from D-erythrose 4-phosphate: step 3/5. Catalyzes the reversible conversion of 3-phosphohydroxypyruvate to phosphoserine and of 3-hydroxy-2-oxo-4-phosphonooxybutanoate to phosphohydroxythreonine. In Ralstonia pickettii (strain 12J), this protein is Phosphoserine aminotransferase.